We begin with the raw amino-acid sequence, 121 residues long: MNLIQTLEQEEISRLNKTIPAYAPGDTVIVSVNVVEGTRKRVQAFEGVVIAKRNRGLNSSFIVRKVSNGEGVERTFQVYSPLIAKIEVKRRGDVRRAKLYYLRSRSGKSARIKEKLGAKAA.

This sequence belongs to the bacterial ribosomal protein bL19 family.

Its function is as follows. This protein is located at the 30S-50S ribosomal subunit interface and may play a role in the structure and function of the aminoacyl-tRNA binding site. This Polaromonas sp. (strain JS666 / ATCC BAA-500) protein is Large ribosomal subunit protein bL19.